Here is a 156-residue protein sequence, read N- to C-terminus: Transcriptional repressor NrdR (156 aa).

Residues 3 to 34 (CPFCHSDNDKVQDSRTAEAGYVVRRKRLCQTC) fold into a zinc finger. Positions 49–139 (VRVVKSDETR…VYRDFDDAKD (91 aa)) constitute an ATP-cone domain.

This sequence belongs to the NrdR family. Zn(2+) is required as a cofactor.

Its function is as follows. Negatively regulates transcription of bacterial ribonucleotide reductase nrd genes and operons by binding to NrdR-boxes. The polypeptide is Transcriptional repressor NrdR (Rhodopirellula baltica (strain DSM 10527 / NCIMB 13988 / SH1)).